The chain runs to 455 residues: RQC trigger complex subunit RQT4 homolog (455 aa).

Disordered stretches follow at residues 64 to 98 and 118 to 148; these read STHSGNSPSIMKNKKNVTPNNNIRQKNTATSSHPS and PASRNKSQSNNISSHEKSSKTTKNVSPGVMT. Composition is skewed to polar residues over residues 65-98 and 119-130; these read THSGNSPSIMKNKKNVTPNNNIRQKNTATSSHPS and ASRNKSQSNNIS. The residue at position 70 (Ser70) is a Phosphoserine. Phosphoserine is present on Ser380.

Component of the RQT (ribosome quality control trigger) complex.

The protein localises to the cytoplasm. Its subcellular location is the cytosol. Its function is as follows. Probably functions as part of the RQC trigger (RQT) complex that activates the ribosome quality control (RQC) pathway, a pathway that degrades nascent peptide chains during problematic translation. The protein is RQC trigger complex subunit RQT4 homolog of Schizosaccharomyces pombe (strain 972 / ATCC 24843) (Fission yeast).